Here is a 260-residue protein sequence, read N- to C-terminus: uncharacterized protein (260 aa).

An N-terminal signal peptide occupies residues Met1 to Ser22. Residue Cys23 is the site of N-palmitoyl cysteine attachment. A lipid anchor (S-diacylglycerol cysteine) is attached at Cys23.

Belongs to the staphylococcal tandem lipoprotein family.

The protein resides in the cell membrane. This is an uncharacterized protein from Staphylococcus aureus (strain N315).